The primary structure comprises 556 residues: Butanoate--CoA ligase AAE1 (556 aa).

The Microbody targeting signal signature appears at 554 to 556 (SKL).

The protein belongs to the ATP-dependent AMP-binding enzyme family. As to expression, expressed in roots, leaves, stems, flowers and developing seeds.

Its subcellular location is the peroxisome. The catalysed reaction is butanoate + ATP + CoA = butanoyl-CoA + AMP + diphosphate. It carries out the reaction hexanoate + ATP + CoA = hexanoyl-CoA + AMP + diphosphate. It catalyses the reaction pentanoate + ATP + CoA = pentanoyl-CoA + AMP + diphosphate. The enzyme catalyses 4-methylpentanoate + ATP + CoA = 4-methylpentanoyl-CoA + AMP + diphosphate. Catalyzes the ligation of CoA on butanoate to produce butanoyl-CoA. Can also use hexanoate, pentanoate and 4-methylpentanoate as substrates with a lower efficiency. This chain is Butanoate--CoA ligase AAE1, found in Arabidopsis thaliana (Mouse-ear cress).